Here is a 119-residue protein sequence, read N- to C-terminus: Phytosulfokines 2 (119 aa).

Residues 1–34 (MSTTRGVSSSSAAAALALLLLFALCFFSFHSAAA) form the signal peptide. A propeptide spanning residues 35-109 (ARAVPRDEHQ…RRLLSDAHLD (75 aa)) is cleaved from the precursor. 2 positions are modified to sulfotyrosine: Y110 and Y112. A propeptide spanning residues 115–119 (HKNKP) is cleaved from the precursor.

Belongs to the phytosulfokine family. Sulfation is important for activity and for the binding to a putative membrane receptor. Post-translationally, PSK-alpha is produced by endopeptidase digestion. PSK-beta is produced from PSK-alpha by exopeptidase digestion.

It is found in the secreted. In terms of biological role, promotes plant cell differentiation, organogenesis and somatic embryogenesis as well as cell proliferation. The sequence is that of Phytosulfokines 2 (PSK2) from Oryza sativa subsp. indica (Rice).